A 127-amino-acid chain; its full sequence is Large ribosomal subunit protein bL17 (127 aa).

Belongs to the bacterial ribosomal protein bL17 family. As to quaternary structure, part of the 50S ribosomal subunit. Contacts protein L32.

The polypeptide is Large ribosomal subunit protein bL17 (Lactobacillus helveticus (strain DPC 4571)).